A 269-amino-acid chain; its full sequence is Glutamate racemase (269 aa).

Residues 11-12 (DS) and 43-44 (YG) contribute to the substrate site. Residue Cys-74 is the Proton donor/acceptor of the active site. 75-76 (NT) provides a ligand contact to substrate. The active-site Proton donor/acceptor is Cys-185. 186–187 (TH) contacts substrate.

It belongs to the aspartate/glutamate racemases family.

It catalyses the reaction L-glutamate = D-glutamate. Its pathway is cell wall biogenesis; peptidoglycan biosynthesis. In terms of biological role, provides the (R)-glutamate required for cell wall biosynthesis. The polypeptide is Glutamate racemase (Bacillus cereus (strain ATCC 10987 / NRS 248)).